Reading from the N-terminus, the 301-residue chain is 3-dehydroquinate dehydratase (301 aa).

The 3-dehydroquinate dehydratase stretch occupies residues 1–221 (MLQYGVLICG…YYAALLALGI (221 aa)). 3-dehydroquinate is bound by residues 32-34 (ELR) and Arg63. The active-site Proton donor/acceptor is the His119. The active-site Schiff-base intermediate with substrate is the Lys145. 3 residues coordinate 3-dehydroquinate: Arg183, Thr202, and Gln206. The region spanning 222–301 (TPSGGGLPAL…QMCKAVQLVA (80 aa)) is the Chorismate mutase domain.

Belongs to the type-I 3-dehydroquinase family. Homodimer.

The enzyme catalyses 3-dehydroquinate = 3-dehydroshikimate + H2O. It functions in the pathway metabolic intermediate biosynthesis; chorismate biosynthesis; chorismate from D-erythrose 4-phosphate and phosphoenolpyruvate: step 3/7. In terms of biological role, involved in the third step of the chorismate pathway, which leads to the biosynthesis of aromatic amino acids. Catalyzes the cis-dehydration of 3-dehydroquinate (DHQ) and introduces the first double bond of the aromatic ring to yield 3-dehydroshikimate. This is 3-dehydroquinate dehydratase from Pyrobaculum aerophilum (strain ATCC 51768 / DSM 7523 / JCM 9630 / CIP 104966 / NBRC 100827 / IM2).